A 1522-amino-acid chain; its full sequence is Paired amphipathic helix protein pst1 (1522 aa).

A disordered region spans residues 139-174; that stretch reads TILSSTDSNIPRPGTVKSSASPFVPNQNPSAPPPPP. The 71-residue stretch at 178-248 folds into the PAH 1 domain; that stretch reads RQLNVTDALS…QGFNTFLPPG (71 aa). The segment at 307-339 is disordered; the sequence is QSSASHPVLQPPAPSTLQFNPSPSPAAPSYPPV. Positions 328 to 337 are enriched in pro residues; the sequence is SPSPAAPSYP. The PAH 2 domain maps to 345 to 415; that stretch reads QAADLDQAIN…EEFKRFLPDV (71 aa). Disordered regions lie at residues 422-504, 928-968, and 1343-1522; these read ETQD…AFNV, AREN…DESS, and SGKA…KDDL. Over residues 426–441 the composition is skewed to polar residues; the sequence is KSTVVPQESATATPKR. S442 carries the post-translational modification Phosphoserine. The span at 442–468 shows a compositional bias: low complexity; the sequence is SPSATPTSALPPIGKFAPPTTAKAQPA. At T446 the chain carries Phosphothreonine. Residues 504-576 form the PAH 3 domain; that stretch reads VPIAQNKNPS…NWLKDLVKYN (73 aa). Residues 928 to 960 show a composition bias toward basic and acidic residues; that stretch reads ARENRSSVKEDYVSESTERTPDASEIDEHISEH. A compositionally biased stretch (polar residues) spans 1385-1398; sequence GKSSVTRGNKTNLK. The span at 1403–1432 shows a compositional bias: basic and acidic residues; that stretch reads RNNDDSSNKINLSEKEKEKESIEDEEKNRE. The residue at position 1443 (S1443) is a Phosphoserine. A compositionally biased stretch (basic and acidic residues) spans 1461–1474; that stretch reads TSSHRPERSSEKKS. Residues 1478–1487 show a composition bias toward polar residues; the sequence is VFTSVKQTAE. The segment covering 1488-1522 has biased composition (acidic residues); it reads NDADNEDDKTDMDDQTEETLDADNTMEEEPSKDDL.

It localises to the nucleus. Functionally, has a role in modulating the nuclear import of TF1 virus-like particles. Essential for viability. In Schizosaccharomyces pombe (strain 972 / ATCC 24843) (Fission yeast), this protein is Paired amphipathic helix protein pst1 (pst1).